The primary structure comprises 382 residues: Inactive serine protease 54 (382 aa).

A signal peptide spans 1–20 (MAELRGILLLLLYMSHSSSA). The Peptidase S1 domain occupies 29–258 (IVDQLHENLV…YSNWIIAKTR (230 aa)). Asn113 carries an N-linked (GlcNAc...) asparagine glycan. Intrachain disulfides connect Cys154/Cys216, Cys185/Cys195, and Cys206/Cys237.

The protein belongs to the peptidase S1 family. Plasma kallikrein subfamily.

The protein localises to the secreted. The protein is Inactive serine protease 54 (Prss54) of Rattus norvegicus (Rat).